Here is a 76-residue protein sequence, read N- to C-terminus: Zinc finger protein 706 (76 aa).

Low complexity predominate over residues 1–13; it reads MARGQQKIQSQQK. Disordered stretches follow at residues 1–32 and 53–76; these read MARG…QKAA and TFKQ…DVQA. Over residues 14–25 the composition is skewed to basic residues; sequence NAKKQAGQKKKQ. The C2H2-type zinc-finger motif lies at 39 to 62; it reads YTCTVCRTQMPDPKTFKQHFESKH. The span at 53 to 62 shows a compositional bias: basic and acidic residues; that stretch reads TFKQHFESKH.

The protein localises to the cytoplasm. It is found in the nucleus. Its function is as follows. Transcription repressor involved in the exit of embryonic stem cells (ESCs) from self-renewal. Acts by repressing expression of KLF4. The chain is Zinc finger protein 706 from Homo sapiens (Human).